The following is a 473-amino-acid chain: Arginine biosynthesis bifunctional protein ArgJ, mitochondrial (473 aa).

Residues T201, K230, T241, E328, N468, and T473 each contribute to the substrate site. T241 functions as the Nucleophile in the catalytic mechanism.

Belongs to the ArgJ family. Heterodimer of an alpha and a beta chain. Post-translationally, the alpha and beta chains are autoproteolytically processed from a single precursor protein within the mitochondrion.

The protein resides in the mitochondrion matrix. It catalyses the reaction N(2)-acetyl-L-ornithine + L-glutamate = N-acetyl-L-glutamate + L-ornithine. It carries out the reaction L-glutamate + acetyl-CoA = N-acetyl-L-glutamate + CoA + H(+). It functions in the pathway amino-acid biosynthesis; L-arginine biosynthesis; L-ornithine and N-acetyl-L-glutamate from L-glutamate and N(2)-acetyl-L-ornithine (cyclic): step 1/1. The protein operates within amino-acid biosynthesis; L-arginine biosynthesis; N(2)-acetyl-L-ornithine from L-glutamate: step 1/4. Its function is as follows. Catalyzes two activities which are involved in the cyclic version of arginine biosynthesis: the synthesis of acetylglutamate from glutamate and acetyl-CoA, and of ornithine by transacetylation between acetylornithine and glutamate. The polypeptide is Arginine biosynthesis bifunctional protein ArgJ, mitochondrial (Ajellomyces capsulatus (strain H143) (Darling's disease fungus)).